The primary structure comprises 302 residues: Large ribosomal subunit protein uL29m (302 aa).

Belongs to the universal ribosomal protein uL29 family. Component of the mitochondrial large ribosomal subunit. Mature mitochondrial ribosomes consist of a small (37S) and a large (54S) subunit. The 37S subunit contains at least 33 different proteins and 1 molecule of RNA (15S). The 54S subunit contains at least 45 different proteins and 1 molecule of RNA (21S).

It is found in the mitochondrion. The protein is Large ribosomal subunit protein uL29m (MRPL4) of Debaryomyces hansenii (strain ATCC 36239 / CBS 767 / BCRC 21394 / JCM 1990 / NBRC 0083 / IGC 2968) (Yeast).